Reading from the N-terminus, the 43-residue chain is Protein PsbN (43 aa).

A helical transmembrane segment spans residues 5 to 27; sequence TLIAISISGLLVSFTGYALYTAF.

It belongs to the PsbN family.

It is found in the plastid. The protein resides in the chloroplast thylakoid membrane. Functionally, may play a role in photosystem I and II biogenesis. The chain is Protein PsbN from Phaseolus vulgaris (Kidney bean).